Consider the following 516-residue polypeptide: Alpha-(1-&gt;6)-mannopyranosyltransferase A (516 aa).

The residue at position 2 (threonine 2) is an N-acetylthreonine. Transmembrane regions (helical) follow at residues 38–58, 78–98, 112–132, 174–194, 198–218, 232–252, 278–298, 326–346, 350–370, 385–405, 414–434, 454–474, and 477–497; these read ARLG…AGSV, GLVL…LAWL, FTMR…VPVF, ITTA…TVIV, VVAG…LLVW, PTAL…MGGV, IILI…LPFL, LLIF…GLGW, LAGS…ANVI, LLRI…PLLW, AALT…PAAL, AIAA…PDGS, and MYSW…WYVL.

Belongs to the MptA/B family.

Its subcellular location is the membrane. Its function is as follows. Involved in the latter stages of the biosynthesis of the alpha-(1-&gt;6) mannan core of lipomannan (LM). Catalyzes the addition of alpha-(1-&gt;6)-mannose residue. The protein is Alpha-(1-&gt;6)-mannopyranosyltransferase A (mptA) of Mycobacterium tuberculosis (strain ATCC 25618 / H37Rv).